The chain runs to 214 residues: Histone H1.1 (214 aa).

Residues 1 to 43 (MSETAPVPQPASVAPEKPAATKKTRKPAKAAVPRKKPAGPSVS) are disordered. Serine 2 carries the post-translational modification N-acetylserine. Serine 2 and serine 12 each carry phosphoserine. Residue lysine 17 is modified to N6-acetyllysine. The span at 20–37 (ATKKTRKPAKAAVPRKKP) shows a compositional bias: basic residues. Lysine 36 is subject to N6-(beta-hydroxybutyryl)lysine. Residues 38–111 (AGPSVSELIV…GAAGSFKLNK (74 aa)) enclose the H15 domain. At serine 43 the chain carries Phosphoserine. Lysine 54 carries the post-translational modification N6-(beta-hydroxybutyryl)lysine. At arginine 56 the chain carries Citrulline. Residue lysine 66 is modified to N6-(beta-hydroxybutyryl)lysine. Phosphoserine is present on serine 67. Lysine 77 bears the N6-acetyllysine mark. An N6-(beta-hydroxybutyryl)lysine modification is found at lysine 87. Lysine 92 is subject to N6-(beta-hydroxybutyryl)lysine; alternate. An N6-acetyllysine; alternate modification is found at lysine 92. A disordered region spans residues 93-214 (GTLVQTKGTG…KPKKAAPKKK (122 aa)). Serine 106 is modified (phosphoserine). Lysine 108 is subject to N6-(beta-hydroxybutyryl)lysine. Residues 116–144 (KASTTKVTVKAKASGAAKKPKKTAGAAAK) show a composition bias toward low complexity. Lysine 121 is subject to N6-acetyllysine. Basic residues-rich tracts occupy residues 145–179 (KTVKTPKKPKKPAVSKKTSSKSPKKPKVVKAKKVA) and 186–214 (KAVKPKAAKVKVTKPKTPAKPKKAAPKKK). Threonine 202 is subject to Phosphothreonine.

The protein belongs to the histone H1/H5 family. Interacts with DFFB. Post-translationally, H1 histones are progressively phosphorylated during the cell cycle, becoming maximally phosphorylated during late G2 phase and M phase, and being dephosphorylated sharply thereafter. Citrullination at Arg-56 (H1R54ci) by PADI4 takes place within the DNA-binding site of H1 and results in its displacement from chromatin and global chromatin decondensation, thereby promoting pluripotency and stem cell maintenance.

The protein resides in the nucleus. The protein localises to the chromosome. In terms of biological role, H1 histones bind to linker DNA between nucleosomes forming the macromolecular structure known as the chromatin fiber. H1 histones are necessary for the condensation of nucleosome chains into higher-order structured fibers. Also acts as a regulator of individual gene transcription through chromatin remodeling. This chain is Histone H1.1, found in Rattus norvegicus (Rat).